The chain runs to 251 residues: Flap endonuclease Xni (251 aa).

Asp-104 contacts Mg(2+). The 90-residue stretch at 160–249 (VQPQQLPDYW…IDGNLQQLRL (90 aa)) folds into the 5'-3' exonuclease domain. Leu-171, Ala-172, Pro-180, Val-182, and Ile-185 together coordinate K(+). Residues 184 to 189 (GIGPKS) are interaction with DNA.

Belongs to the Xni family. Mg(2+) is required as a cofactor. It depends on K(+) as a cofactor.

Functionally, has flap endonuclease activity. During DNA replication, flap endonucleases cleave the 5'-overhanging flap structure that is generated by displacement synthesis when DNA polymerase encounters the 5'-end of a downstream Okazaki fragment. This Escherichia coli O81 (strain ED1a) protein is Flap endonuclease Xni.